A 182-amino-acid polypeptide reads, in one-letter code: Small ribosomal subunit protein uS4 (182 aa).

Disordered stretches follow at residues 1–23 (MGHPKKPRKQYDTPSHPWNADRI) and 158–182 (SSVAKQFETQETEEVAAEEEPKDEE). The S4 RNA-binding domain maps to 103-170 (RRLQSLVFKR…AKQFETQETE (68 aa)). The span at 167–182 (QETEEVAAEEEPKDEE) shows a compositional bias: acidic residues.

This sequence belongs to the universal ribosomal protein uS4 family. Part of the 30S ribosomal subunit. Contacts protein S5. The interaction surface between S4 and S5 is involved in control of translational fidelity.

One of the primary rRNA binding proteins, it binds directly to 16S rRNA where it nucleates assembly of the body of the 30S subunit. Functionally, with S5 and S12 plays an important role in translational accuracy. The protein is Small ribosomal subunit protein uS4 of Methanosphaera stadtmanae (strain ATCC 43021 / DSM 3091 / JCM 11832 / MCB-3).